The sequence spans 382 residues: uncharacterized protein (382 aa).

This is an uncharacterized protein from Frog virus 3 (isolate Goorha) (FV-3).